The primary structure comprises 947 residues: Protein translocase subunit SecA 1 (947 aa).

ATP contacts are provided by residues Gln83, 101–105 (GEGKT), and Asp490. Residues 860 to 947 (AKAQEQTGQG…KTSKPTRRRG (88 aa)) are disordered. Residues 925-934 (TRRERREAAR) show a composition bias toward basic and acidic residues. Basic residues predominate over residues 935 to 947 (KQAKTSKPTRRRG).

It belongs to the SecA family. In terms of assembly, monomer and homodimer. Part of the essential Sec protein translocation apparatus which comprises SecA, SecYEG and auxiliary proteins SecDF. Other proteins may also be involved.

It is found in the cell membrane. Its subcellular location is the cytoplasm. It carries out the reaction ATP + H2O + cellular proteinSide 1 = ADP + phosphate + cellular proteinSide 2.. Its function is as follows. Part of the Sec protein translocase complex. Interacts with the SecYEG preprotein conducting channel. Has a central role in coupling the hydrolysis of ATP to the transfer of proteins into and across the cell membrane, serving as an ATP-driven molecular motor driving the stepwise translocation of polypeptide chains across the membrane. The polypeptide is Protein translocase subunit SecA 1 (Mycobacterium sp. (strain JLS)).